The chain runs to 513 residues: ATP synthase subunit alpha 2 (513 aa).

152 to 159 (GDSKTGKT) serves as a coordination point for ATP.

This sequence belongs to the ATPase alpha/beta chains family. As to quaternary structure, F-type ATPases have 2 components, CF(1) - the catalytic core - and CF(0) - the membrane proton channel. CF(1) has five subunits: alpha(3), beta(3), gamma(1), delta(1), epsilon(1). CF(0) has three main subunits: a(1), b(2) and c(9-12). The alpha and beta chains form an alternating ring which encloses part of the gamma chain. CF(1) is attached to CF(0) by a central stalk formed by the gamma and epsilon chains, while a peripheral stalk is formed by the delta and b chains.

It is found in the cell membrane. It catalyses the reaction ATP + H2O + 4 H(+)(in) = ADP + phosphate + 5 H(+)(out). In terms of biological role, produces ATP from ADP in the presence of a proton gradient across the membrane. The alpha chain is a regulatory subunit. The protein is ATP synthase subunit alpha 2 of Mycoplasmopsis pulmonis (strain UAB CTIP) (Mycoplasma pulmonis).